A 250-amino-acid polypeptide reads, in one-letter code: Mediator of RNA polymerase II transcription subunit 6 (250 aa).

The interval 166–250 is disordered; that stretch reads KKREEEKKED…EPTARTTSKQ (85 aa). The segment covering 204 to 223 has biased composition (acidic residues); it reads PAEDALEREEKEEVEEEEEE. Over residues 224 to 239 the composition is skewed to basic and acidic residues; sequence TLKTEEPTTSTDEPKF.

The protein belongs to the Mediator complex subunit 6 family. As to quaternary structure, component of the Mediator complex. Interacts with let-19/mdt-13. Interacts with RNA polymerase II. Interacts with mdt-28.

Its subcellular location is the nucleus. In terms of biological role, component of the Mediator complex, a coactivator involved in the regulated transcription of nearly all RNA polymerase II-dependent genes. Mediator functions as a bridge to convey information from gene-specific regulatory proteins to the basal RNA polymerase II transcription machinery. Mediator is recruited to promoters by direct interactions with regulatory proteins and serves as a scaffold for the assembly of a functional preinitiation complex with RNA polymerase II and the general transcription factors. Acts to repress beta-catenin target genes. Required for asymmetric division of T-cells and for gonad and germ cell development. This Caenorhabditis elegans protein is Mediator of RNA polymerase II transcription subunit 6 (mdt-6).